Reading from the N-terminus, the 396-residue chain is 8-amino-7-oxononanoate synthase (396 aa).

Arginine 19 contacts substrate. Pyridoxal 5'-phosphate is bound at residue 106–107 (GY). Histidine 131 serves as a coordination point for substrate. Pyridoxal 5'-phosphate contacts are provided by serine 176, histidine 204, and threonine 233. Lysine 236 is modified (N6-(pyridoxal phosphate)lysine). Threonine 350 contacts substrate.

The protein belongs to the class-II pyridoxal-phosphate-dependent aminotransferase family. BioF subfamily. Homodimer. The cofactor is pyridoxal 5'-phosphate.

It carries out the reaction 6-carboxyhexanoyl-[ACP] + L-alanine + H(+) = (8S)-8-amino-7-oxononanoate + holo-[ACP] + CO2. It functions in the pathway cofactor biosynthesis; biotin biosynthesis. Catalyzes the decarboxylative condensation of pimeloyl-[acyl-carrier protein] and L-alanine to produce 8-amino-7-oxononanoate (AON), [acyl-carrier protein], and carbon dioxide. This is 8-amino-7-oxononanoate synthase from Pseudomonas syringae pv. tomato (strain ATCC BAA-871 / DC3000).